The following is a 465-amino-acid chain: ATP-dependent protease ATPase subunit HslU (465 aa).

ATP-binding positions include valine 19, 61-66, aspartate 277, glutamate 343, and arginine 415; that span reads GVGKTE.

It belongs to the ClpX chaperone family. HslU subfamily. As to quaternary structure, a double ring-shaped homohexamer of HslV is capped on each side by a ring-shaped HslU homohexamer. The assembly of the HslU/HslV complex is dependent on binding of ATP.

The protein localises to the cytoplasm. ATPase subunit of a proteasome-like degradation complex; this subunit has chaperone activity. The binding of ATP and its subsequent hydrolysis by HslU are essential for unfolding of protein substrates subsequently hydrolyzed by HslV. HslU recognizes the N-terminal part of its protein substrates and unfolds these before they are guided to HslV for hydrolysis. The polypeptide is ATP-dependent protease ATPase subunit HslU (Geobacillus sp. (strain WCH70)).